Here is a 122-residue protein sequence, read N- to C-terminus: Small ribosomal subunit protein uS13 (122 aa).

The disordered stretch occupies residues 92-122; it reads HRNGLPVRGQRTHTNARTRKGKAKPIAGKKK. Positions 101 to 122 are enriched in basic residues; sequence QRTHTNARTRKGKAKPIAGKKK.

Belongs to the universal ribosomal protein uS13 family. As to quaternary structure, part of the 30S ribosomal subunit. Forms a loose heterodimer with protein S19. Forms two bridges to the 50S subunit in the 70S ribosome.

Located at the top of the head of the 30S subunit, it contacts several helices of the 16S rRNA. In the 70S ribosome it contacts the 23S rRNA (bridge B1a) and protein L5 of the 50S subunit (bridge B1b), connecting the 2 subunits; these bridges are implicated in subunit movement. Contacts the tRNAs in the A and P-sites. This is Small ribosomal subunit protein uS13 from Erythrobacter litoralis (strain HTCC2594).